The primary structure comprises 76 residues: ATP synthase subunit 9, mitochondrial (76 aa).

Helical transmembrane passes span 10–30 (IGAG…AIVF) and 52–72 (ILGF…SFLL).

Belongs to the ATPase C chain family. In terms of assembly, F-type ATPases have 2 components, CF(1) - the catalytic core - and CF(0) - the membrane proton channel. CF(1) has five subunits: alpha(3), beta(3), gamma(1), delta(1), epsilon(1). CF(0) has three main subunits: a, b and c.

The protein localises to the mitochondrion membrane. Its function is as follows. Mitochondrial membrane ATP synthase (F(1)F(0) ATP synthase or Complex V) produces ATP from ADP in the presence of a proton gradient across the membrane which is generated by electron transport complexes of the respiratory chain. F-type ATPases consist of two structural domains, F(1) - containing the extramembraneous catalytic core and F(0) - containing the membrane proton channel, linked together by a central stalk and a peripheral stalk. During catalysis, ATP synthesis in the catalytic domain of F(1) is coupled via a rotary mechanism of the central stalk subunits to proton translocation. Part of the complex F(0) domain. A homomeric c-ring of probably 10 subunits is part of the complex rotary element. In Kluyveromyces lactis (strain ATCC 8585 / CBS 2359 / DSM 70799 / NBRC 1267 / NRRL Y-1140 / WM37) (Yeast), this protein is ATP synthase subunit 9, mitochondrial (ATP9).